The chain runs to 545 residues: Inosine-5'-monophosphate dehydrogenase (545 aa).

CBS domains lie at 138–194 and 201–258; these read MITD…DYDT and MTKE…PDAT. NAD(+)-binding positions include aspartate 295 and 347-349; that span reads GIG. Glycine 349 and glycine 351 together coordinate K(+). An IMP-binding site is contributed by serine 352. Residue cysteine 354 coordinates K(+). The active-site Thioimidate intermediate is the cysteine 354. IMP is bound by residues 387 to 389, 410 to 411, and 434 to 438; these read DGG, GG, and YRGMG. The active-site Proton acceptor is the arginine 455. An IMP-binding site is contributed by glutamate 470. Residues glutamate 524, serine 525, and histidine 526 each coordinate K(+).

Belongs to the IMPDH/GMPR family. Homotetramer. The cofactor is K(+).

The enzyme catalyses IMP + NAD(+) + H2O = XMP + NADH + H(+). The protein operates within purine metabolism; XMP biosynthesis via de novo pathway; XMP from IMP: step 1/1. With respect to regulation, mycophenolic acid (MPA) is a non-competitive inhibitor that prevents formation of the closed enzyme conformation by binding to the same site as the amobile flap. In contrast, mizoribine monophosphate (MZP) is a competitive inhibitor that induces the closed conformation. MPA is a potent inhibitor of mammalian IMPDHs but a poor inhibitor of the bacterial enzymes. MZP is a more potent inhibitor of bacterial IMPDH. Catalyzes the conversion of inosine 5'-phosphate (IMP) to xanthosine 5'-phosphate (XMP), the first committed and rate-limiting step in the de novo synthesis of guanine nucleotides, and therefore plays an important role in the regulation of cell growth. The protein is Inosine-5'-monophosphate dehydrogenase of Bifidobacterium longum (strain NCC 2705).